Here is a 66-residue protein sequence, read N- to C-terminus: ATP synthase F(0) complex subunit 8 (66 aa).

Residues 8-24 (IWLLAVVIVLTTLMIFL) traverse the membrane as a helical segment. Lys54 is subject to N6-acetyllysine; alternate. Lys54 carries the post-translational modification N6-succinyllysine; alternate. Lys57 carries the post-translational modification N6-acetyllysine.

The protein belongs to the ATPase protein 8 family. In terms of assembly, component of the ATP synthase complex composed at least of ATP5F1A/subunit alpha, ATP5F1B/subunit beta, ATP5MC1/subunit c (homooctomer), MT-ATP6/subunit a, MT-ATP8/subunit 8, ATP5ME/subunit e, ATP5MF/subunit f, ATP5MG/subunit g, ATP5MK/subunit k, ATP5MJ/subunit j, ATP5F1C/subunit gamma, ATP5F1D/subunit delta, ATP5F1E/subunit epsilon, ATP5PF/subunit F6, ATP5PB/subunit b, ATP5PD/subunit d, ATP5PO/subunit OSCP. ATP synthase complex consists of a soluble F(1) head domain (subunits alpha(3) and beta(3)) - the catalytic core - and a membrane F(0) domain - the membrane proton channel (subunits c, a, 8, e, f, g, k and j). These two domains are linked by a central stalk (subunits gamma, delta, and epsilon) rotating inside the F1 region and a stationary peripheral stalk (subunits F6, b, d, and OSCP). Interacts with PRICKLE3.

It is found in the mitochondrion membrane. In terms of biological role, subunit 8, of the mitochondrial membrane ATP synthase complex (F(1)F(0) ATP synthase or Complex V) that produces ATP from ADP in the presence of a proton gradient across the membrane which is generated by electron transport complexes of the respiratory chain. ATP synthase complex consist of a soluble F(1) head domain - the catalytic core - and a membrane F(1) domain - the membrane proton channel. These two domains are linked by a central stalk rotating inside the F(1) region and a stationary peripheral stalk. During catalysis, ATP synthesis in the catalytic domain of F(1) is coupled via a rotary mechanism of the central stalk subunits to proton translocation. In vivo, can only synthesize ATP although its ATP hydrolase activity can be activated artificially in vitro. Part of the complex F(0) domain. The chain is ATP synthase F(0) complex subunit 8 from Loxodonta africana (African elephant).